The chain runs to 342 residues: S-adenosylmethionine:tRNA ribosyltransferase-isomerase (342 aa).

The protein belongs to the QueA family. Monomer.

The protein localises to the cytoplasm. The catalysed reaction is 7-aminomethyl-7-carbaguanosine(34) in tRNA + S-adenosyl-L-methionine = epoxyqueuosine(34) in tRNA + adenine + L-methionine + 2 H(+). It participates in tRNA modification; tRNA-queuosine biosynthesis. Functionally, transfers and isomerizes the ribose moiety from AdoMet to the 7-aminomethyl group of 7-deazaguanine (preQ1-tRNA) to give epoxyqueuosine (oQ-tRNA). This is S-adenosylmethionine:tRNA ribosyltransferase-isomerase from Streptococcus pyogenes serotype M6 (strain ATCC BAA-946 / MGAS10394).